Reading from the N-terminus, the 196-residue chain is HTH-type transcriptional regulator EcpR (196 aa).

Positions 138–196 (KDIKKDKITDREMEIIRMTAQGMLPKSIARIENCSVKTVYTHRRNAEAKLYSKIYKLVP) constitute an HTH luxR-type domain. The segment at residues 162 to 181 (PKSIARIENCSVKTVYTHRR) is a DNA-binding region (H-T-H motif).

This sequence belongs to the EcpR/MatA family.

It localises to the cytoplasm. Functionally, part of the ecpRABCDE operon, which encodes the E.coli common pilus (ECP). ECP is found in both commensal and pathogenic strains and plays a dual role in early-stage biofilm development and host cell recognition. Positively regulates the expression of the ecp operon. This chain is HTH-type transcriptional regulator EcpR (ecpR), found in Escherichia coli O17:K52:H18 (strain UMN026 / ExPEC).